A 143-amino-acid chain; its full sequence is Large ribosomal subunit protein uL11 (143 aa).

Belongs to the universal ribosomal protein uL11 family. Part of the ribosomal stalk of the 50S ribosomal subunit. Interacts with L10 and the large rRNA to form the base of the stalk. L10 forms an elongated spine to which L12 dimers bind in a sequential fashion forming a multimeric L10(L12)X complex. One or more lysine residues are methylated.

Its function is as follows. Forms part of the ribosomal stalk which helps the ribosome interact with GTP-bound translation factors. In Burkholderia cenocepacia (strain HI2424), this protein is Large ribosomal subunit protein uL11.